We begin with the raw amino-acid sequence, 353 residues long: Photosystem II protein D1 (353 aa).

Thr-2 carries the N-acetylthreonine modification. Thr-2 carries the post-translational modification Phosphothreonine. 3 helical membrane-spanning segments follow: residues 29–46, 118–133, and 142–156; these read YIGW…TATS, HFLL…EWEL, and WIAV…AATA. His-118 lines the chlorophyll a pocket. A pheophytin a-binding site is contributed by Tyr-126. Residues Asp-170 and Glu-189 each coordinate [CaMn4O5] cluster. A helical membrane pass occupies residues 197–218; that stretch reads FHMLGVAGVFGGSLFSAMHGSL. His-198 contributes to the chlorophyll a binding site. A quinone-binding positions include His-215 and 264–265; that span reads SF. His-215 is a Fe cation binding site. His-272 is a Fe cation binding site. The chain crosses the membrane as a helical span at residues 274-288; sequence FLAAWPVVGIWFTAL. 4 residues coordinate [CaMn4O5] cluster: His-332, Glu-333, Asp-342, and Ala-344. The propeptide occupies 345–353; it reads AVEVPAING.

Belongs to the reaction center PufL/M/PsbA/D family. As to quaternary structure, PSII is composed of 1 copy each of membrane proteins PsbA, PsbB, PsbC, PsbD, PsbE, PsbF, PsbH, PsbI, PsbJ, PsbK, PsbL, PsbM, PsbT, PsbX, PsbY, PsbZ, Psb30/Ycf12, at least 3 peripheral proteins of the oxygen-evolving complex and a large number of cofactors. It forms dimeric complexes. The D1/D2 heterodimer binds P680, chlorophylls that are the primary electron donor of PSII, and subsequent electron acceptors. It shares a non-heme iron and each subunit binds pheophytin, quinone, additional chlorophylls, carotenoids and lipids. D1 provides most of the ligands for the Mn4-Ca-O5 cluster of the oxygen-evolving complex (OEC). There is also a Cl(-1) ion associated with D1 and D2, which is required for oxygen evolution. The PSII complex binds additional chlorophylls, carotenoids and specific lipids. serves as cofactor. In terms of processing, tyr-161 forms a radical intermediate that is referred to as redox-active TyrZ, YZ or Y-Z. Post-translationally, C-terminally processed by CTPA; processing is essential to allow assembly of the oxygen-evolving complex and thus photosynthetic growth.

The protein localises to the plastid. Its subcellular location is the chloroplast thylakoid membrane. It catalyses the reaction 2 a plastoquinone + 4 hnu + 2 H2O = 2 a plastoquinol + O2. In terms of biological role, photosystem II (PSII) is a light-driven water:plastoquinone oxidoreductase that uses light energy to abstract electrons from H(2)O, generating O(2) and a proton gradient subsequently used for ATP formation. It consists of a core antenna complex that captures photons, and an electron transfer chain that converts photonic excitation into a charge separation. The D1/D2 (PsbA/PsbD) reaction center heterodimer binds P680, the primary electron donor of PSII as well as several subsequent electron acceptors. This is Photosystem II protein D1 from Hordeum vulgare (Barley).